The following is a 257-amino-acid chain: Thiazole synthase (257 aa).

Lys96 (schiff-base intermediate with DXP) is an active-site residue. 1-deoxy-D-xylulose 5-phosphate contacts are provided by residues Gly157, 184–185, and 206–207; these read AG and NT.

Belongs to the ThiG family. As to quaternary structure, homotetramer. Forms heterodimers with either ThiH or ThiS.

The protein localises to the cytoplasm. It carries out the reaction [ThiS sulfur-carrier protein]-C-terminal-Gly-aminoethanethioate + 2-iminoacetate + 1-deoxy-D-xylulose 5-phosphate = [ThiS sulfur-carrier protein]-C-terminal Gly-Gly + 2-[(2R,5Z)-2-carboxy-4-methylthiazol-5(2H)-ylidene]ethyl phosphate + 2 H2O + H(+). It participates in cofactor biosynthesis; thiamine diphosphate biosynthesis. Its function is as follows. Catalyzes the rearrangement of 1-deoxy-D-xylulose 5-phosphate (DXP) to produce the thiazole phosphate moiety of thiamine. Sulfur is provided by the thiocarboxylate moiety of the carrier protein ThiS. In vitro, sulfur can be provided by H(2)S. This is Thiazole synthase from Bartonella quintana (strain Toulouse) (Rochalimaea quintana).